The primary structure comprises 499 residues: Maturase K (499 aa).

This sequence belongs to the intron maturase 2 family. MatK subfamily.

It localises to the plastid. Its subcellular location is the chloroplast. Usually encoded in the trnK tRNA gene intron. Probably assists in splicing its own and other chloroplast group II introns. The chain is Maturase K from Camellia sinensis (Tea plant).